A 70-amino-acid chain; its full sequence is U-scoloptoxin(04)-Er3a (70 aa).

The first 24 residues, 1 to 24 (MAAIRNLLILTMLLIVCVSWNADA), serve as a signal peptide directing secretion.

It belongs to the scoloptoxin-04 family. In terms of processing, contains 2 disulfide bonds. In terms of tissue distribution, expressed by the venom gland.

Its subcellular location is the secreted. This chain is U-scoloptoxin(04)-Er3a, found in Ethmostigmus rubripes (Giant centipede).